The following is a 210-amino-acid chain: Uracil phosphoribosyltransferase (210 aa).

5-phospho-alpha-D-ribose 1-diphosphate-binding positions include Arg-78, Arg-103, and 130–138 (DPMLATGGT). Residues Ile-193 and 198–200 (GDA) each bind uracil. Asp-199 is a binding site for 5-phospho-alpha-D-ribose 1-diphosphate.

It belongs to the UPRTase family. Mg(2+) serves as cofactor.

The enzyme catalyses UMP + diphosphate = 5-phospho-alpha-D-ribose 1-diphosphate + uracil. The protein operates within pyrimidine metabolism; UMP biosynthesis via salvage pathway; UMP from uracil: step 1/1. Its activity is regulated as follows. Allosterically activated by GTP. Functionally, catalyzes the conversion of uracil and 5-phospho-alpha-D-ribose 1-diphosphate (PRPP) to UMP and diphosphate. In Xanthomonas campestris pv. campestris (strain 8004), this protein is Uracil phosphoribosyltransferase.